Reading from the N-terminus, the 581-residue chain is Arginine--tRNA ligase (581 aa).

The short motif at 126-136 (PNLAKEMHVGH) is the 'HIGH' region element.

Belongs to the class-I aminoacyl-tRNA synthetase family. Monomer.

It localises to the cytoplasm. It carries out the reaction tRNA(Arg) + L-arginine + ATP = L-arginyl-tRNA(Arg) + AMP + diphosphate. The polypeptide is Arginine--tRNA ligase (Shewanella denitrificans (strain OS217 / ATCC BAA-1090 / DSM 15013)).